A 354-amino-acid polypeptide reads, in one-letter code: Uroporphyrinogen decarboxylase (354 aa).

Substrate-binding positions include 27–31 (RQAGR), D77, Y154, T209, and H327.

Belongs to the uroporphyrinogen decarboxylase family. As to quaternary structure, homodimer.

It localises to the cytoplasm. It carries out the reaction uroporphyrinogen III + 4 H(+) = coproporphyrinogen III + 4 CO2. Its pathway is porphyrin-containing compound metabolism; protoporphyrin-IX biosynthesis; coproporphyrinogen-III from 5-aminolevulinate: step 4/4. Functionally, catalyzes the decarboxylation of four acetate groups of uroporphyrinogen-III to yield coproporphyrinogen-III. The chain is Uroporphyrinogen decarboxylase from Escherichia coli (strain UTI89 / UPEC).